Consider the following 406-residue polypeptide: Probable mannan endo-1,4-beta-mannosidase C (406 aa).

The N-terminal stretch at Met-1–Gly-20 is a signal peptide. N-linked (GlcNAc...) asparagine glycosylation is present at Asn-58. Trp-80 serves as a coordination point for substrate. Residues Asn-86 and Asn-114 are each glycosylated (N-linked (GlcNAc...) asparagine). Asn-201 is a binding site for substrate. Catalysis depends on Glu-202, which acts as the Proton donor. Residue Tyr-287 coordinates substrate. Glu-320 serves as the catalytic Nucleophile. An N-linked (GlcNAc...) asparagine glycan is attached at Asn-338. Residue Trp-362 coordinates substrate.

This sequence belongs to the glycosyl hydrolase 5 (cellulase A) family.

It is found in the secreted. It catalyses the reaction Random hydrolysis of (1-&gt;4)-beta-D-mannosidic linkages in mannans, galactomannans and glucomannans.. In terms of biological role, endo-1,4-mannanase, a crucial enzyme for depolymerization of seed galactomannans and wood galactoglucomannans. The polypeptide is Probable mannan endo-1,4-beta-mannosidase C (manC) (Aspergillus terreus (strain NIH 2624 / FGSC A1156)).